The sequence spans 74 residues: Anaphase-promoting complex subunit 13 (74 aa).

The segment at Leu-33–Gln-53 is disordered.

Belongs to the APC13 family. The mammalian APC/C is composed at least of 14 distinct subunits ANAPC1, ANAPC2, CDC27/APC3, ANAPC4, ANAPC5, CDC16/APC6, ANAPC7, CDC23/APC8, ANAPC10, ANAPC11, CDC26/APC12, ANAPC13, ANAPC15 and ANAPC16 that assemble into a complex of at least 19 chains with a combined molecular mass of around 1.2 MDa; APC/C interacts with FZR1 and FBXO5.

The protein localises to the nucleus. It functions in the pathway protein modification; protein ubiquitination. In terms of biological role, component of the anaphase promoting complex/cyclosome (APC/C), a cell cycle-regulated E3 ubiquitin ligase that controls progression through mitosis and the G1 phase of the cell cycle. The APC/C complex acts by mediating ubiquitination and subsequent degradation of target proteins: it mainly mediates the formation of 'Lys-11'-linked polyubiquitin chains and, to a lower extent, the formation of 'Lys-48'- and 'Lys-63'-linked polyubiquitin chains. The APC/C complex catalyzes assembly of branched 'Lys-11'-/'Lys-48'-linked branched ubiquitin chains on target proteins. This Bos taurus (Bovine) protein is Anaphase-promoting complex subunit 13 (ANAPC13).